Reading from the N-terminus, the 426-residue chain is Glutamate-1-semialdehyde 2,1-aminomutase (426 aa).

Lys-265 carries the N6-(pyridoxal phosphate)lysine modification.

This sequence belongs to the class-III pyridoxal-phosphate-dependent aminotransferase family. HemL subfamily. Homodimer. The cofactor is pyridoxal 5'-phosphate.

The protein resides in the cytoplasm. It carries out the reaction (S)-4-amino-5-oxopentanoate = 5-aminolevulinate. The protein operates within porphyrin-containing compound metabolism; protoporphyrin-IX biosynthesis; 5-aminolevulinate from L-glutamyl-tRNA(Glu): step 2/2. This Erwinia tasmaniensis (strain DSM 17950 / CFBP 7177 / CIP 109463 / NCPPB 4357 / Et1/99) protein is Glutamate-1-semialdehyde 2,1-aminomutase.